The primary structure comprises 405 residues: Elongation factor Tu (405 aa).

Positions 10 to 215 (KPHVNIGTIG…AVDSYIPTPE (206 aa)) constitute a tr-type G domain. Residues 19-26 (GHVDHGKT) are G1. 19-26 (GHVDHGKT) is a binding site for GTP. Threonine 26 serves as a coordination point for Mg(2+). Positions 61-65 (GITIN) are G2. Residues 82–85 (DCPG) are G3. GTP-binding positions include 82–86 (DCPGH) and 137–140 (NKVD). The interval 137–140 (NKVD) is G4. The interval 175-177 (SAL) is G5.

It belongs to the TRAFAC class translation factor GTPase superfamily. Classic translation factor GTPase family. EF-Tu/EF-1A subfamily. Monomer.

The protein localises to the cytoplasm. The catalysed reaction is GTP + H2O = GDP + phosphate + H(+). Its function is as follows. GTP hydrolase that promotes the GTP-dependent binding of aminoacyl-tRNA to the A-site of ribosomes during protein biosynthesis. This chain is Elongation factor Tu, found in Deinococcus radiodurans (strain ATCC 13939 / DSM 20539 / JCM 16871 / CCUG 27074 / LMG 4051 / NBRC 15346 / NCIMB 9279 / VKM B-1422 / R1).